The sequence spans 182 residues: MSNQELKNTMSKSVEAAQRNFNTIRTGRANTSLLDRISVEYYGAETPLKSLATITTPDSQTIAIQPFDLGSLASIEKAIATSDLGFTPNNDGKIIRINVPPLTEERRKEFCKLASKYAEEGKVALRNIRREAIDRVKKSEKDGDLSEDQSRDEQEKIQKETDNFIKDIEKKLSEKEAEILKV.

The interval 136 to 160 (VKKSEKDGDLSEDQSRDEQEKIQKE) is disordered.

Belongs to the RRF family.

The protein localises to the cytoplasm. In terms of biological role, responsible for the release of ribosomes from messenger RNA at the termination of protein biosynthesis. May increase the efficiency of translation by recycling ribosomes from one round of translation to another. The protein is Ribosome-recycling factor of Prochlorococcus marinus (strain NATL1A).